We begin with the raw amino-acid sequence, 594 residues long: Cytoplasmic polyadenylation element-binding protein 2 (594 aa).

The span at 72–90 (KEREKVDEEKEGVERREEN) shows a compositional bias: basic and acidic residues. 2 disordered regions span residues 72-91 (KEREKVDEEKEGVERREENG) and 367-388 (GGGFNSGSGSGNGTKSDGSTSE). A compositionally biased stretch (gly residues) spans 367-378 (GGGFNSGSGSGN). Positions 458–540 (LVAFIGGVPR…KRVEIKPYFF (83 aa)) constitute an RRM domain.

Its function is as follows. Cytoplasmic polyadenylation element binding protein that binds to and regulates the translation of specific mRNAs. The chain is Cytoplasmic polyadenylation element-binding protein 2 (cpb-2) from Caenorhabditis japonica.